We begin with the raw amino-acid sequence, 342 residues long: uncharacterized protein (342 aa).

In terms of domain architecture, MurNAc-LAA spans 3–173; the sequence is IAIRGGHNFL…LIGYLIAKGI (171 aa).

It to C.perfringens CPE1502.

This is an uncharacterized protein from Clostridium perfringens.